We begin with the raw amino-acid sequence, 88 residues long: MDGFDKTMKFSIQDEKQSVHVNDVLLTVYDALQEKGYNPINQIVGYLLSGDPAYIPRHKDARSIIRKLERDELIEELVKSYLKHHREE.

The protein belongs to the UPF0297 family.

This chain is UPF0297 protein BT9727_4120, found in Bacillus thuringiensis subsp. konkukian (strain 97-27).